A 255-amino-acid polypeptide reads, in one-letter code: tRNA pseudouridine synthase A (255 aa).

D43 acts as the Nucleophile in catalysis. Y94 provides a ligand contact to substrate.

The protein belongs to the tRNA pseudouridine synthase TruA family.

The enzyme catalyses uridine(38/39/40) in tRNA = pseudouridine(38/39/40) in tRNA. Formation of pseudouridine at positions 38, 39 and 40 in the anticodon stem and loop of transfer RNAs. The chain is tRNA pseudouridine synthase A from Pyrobaculum islandicum (strain DSM 4184 / JCM 9189 / GEO3).